A 506-amino-acid chain; its full sequence is Catalase (506 aa).

Catalysis depends on residues histidine 73 and asparagine 146. A heme-binding site is contributed by tyrosine 356. The short motif at 504-506 (SKF) is the Microbody targeting signal element.

The protein belongs to the catalase family. Homotetramer. It depends on heme as a cofactor.

The protein resides in the peroxisome matrix. The catalysed reaction is 2 H2O2 = O2 + 2 H2O. In terms of biological role, catalyzes the degradation of hydrogen peroxide (H(2)O(2)) generated by peroxisomal oxidases to water and oxygen, thereby protecting cells from the toxic effects of hydrogen peroxide. In Drosophila melanogaster (Fruit fly), this protein is Catalase (Cat).